The chain runs to 202 residues: ATP synthase subunit b 1 (202 aa).

A helical membrane pass occupies residues 17–37 (IAAVLCFSVLVPLVAMAAEGG).

The protein belongs to the ATPase B chain family. In terms of assembly, F-type ATPases have 2 components, F(1) - the catalytic core - and F(0) - the membrane proton channel. F(1) has five subunits: alpha(3), beta(3), gamma(1), delta(1), epsilon(1). F(0) has three main subunits: a(1), b(2) and c(10-14). The alpha and beta chains form an alternating ring which encloses part of the gamma chain. F(1) is attached to F(0) by a central stalk formed by the gamma and epsilon chains, while a peripheral stalk is formed by the delta and b chains.

The protein localises to the cell inner membrane. F(1)F(0) ATP synthase produces ATP from ADP in the presence of a proton or sodium gradient. F-type ATPases consist of two structural domains, F(1) containing the extramembraneous catalytic core and F(0) containing the membrane proton channel, linked together by a central stalk and a peripheral stalk. During catalysis, ATP synthesis in the catalytic domain of F(1) is coupled via a rotary mechanism of the central stalk subunits to proton translocation. Its function is as follows. Component of the F(0) channel, it forms part of the peripheral stalk, linking F(1) to F(0). This is ATP synthase subunit b 1 from Syntrophus aciditrophicus (strain SB).